Reading from the N-terminus, the 339-residue chain is Aspartate carbamoyltransferase catalytic subunit (339 aa).

2 residues coordinate carbamoyl phosphate: Arg69 and Thr70. Lys97 contacts L-aspartate. Residues Arg119, His149, and Gln152 each coordinate carbamoyl phosphate. 2 residues coordinate L-aspartate: Arg182 and Arg237. Carbamoyl phosphate-binding residues include Gly278 and Pro279.

Belongs to the aspartate/ornithine carbamoyltransferase superfamily. ATCase family. As to quaternary structure, heterododecamer (2C3:3R2) of six catalytic PyrB chains organized as two trimers (C3), and six regulatory PyrI chains organized as three dimers (R2).

The catalysed reaction is carbamoyl phosphate + L-aspartate = N-carbamoyl-L-aspartate + phosphate + H(+). It participates in pyrimidine metabolism; UMP biosynthesis via de novo pathway; (S)-dihydroorotate from bicarbonate: step 2/3. Functionally, catalyzes the condensation of carbamoyl phosphate and aspartate to form carbamoyl aspartate and inorganic phosphate, the committed step in the de novo pyrimidine nucleotide biosynthesis pathway. This Hydrogenovibrio crunogenus (strain DSM 25203 / XCL-2) (Thiomicrospira crunogena) protein is Aspartate carbamoyltransferase catalytic subunit.